The sequence spans 398 residues: Probable transcription factor PosF21 (398 aa).

Disordered stretches follow at residues 1-46 and 112-150; these read MDKE…HDIS and ATSS…NSLG. Residues 7–19 show a composition bias toward pro residues; the sequence is PAPPCGGLPPPSP. Positions 125 to 148 are enriched in polar residues; it reads AWKNETMMQTGTGSTSNPQNTVNS. In terms of domain architecture, bZIP spans 201-264; it reads DPKRAKRIWA…NGLTVENNEL (64 aa). A basic motif region spans residues 203-224; that stretch reads KRAKRIWANRQSAARSKERKTR. Residues 229 to 264 are leucine-zipper; sequence LERKVQTLQTEATTLSAQLTLLQRDTNGLTVENNEL.

Belongs to the bZIP family.

It is found in the nucleus. Its function is as follows. Putative transcription factor with an activatory role. The sequence is that of Probable transcription factor PosF21 (POSF21) from Arabidopsis thaliana (Mouse-ear cress).